We begin with the raw amino-acid sequence, 415 residues long: Arginine biosynthesis bifunctional protein ArgJ (415 aa).

Substrate-binding residues include threonine 156, lysine 182, threonine 193, glutamate 279, asparagine 410, and threonine 415. The active-site Nucleophile is the threonine 193.

This sequence belongs to the ArgJ family. As to quaternary structure, heterotetramer of two alpha and two beta chains.

The protein localises to the cytoplasm. It carries out the reaction N(2)-acetyl-L-ornithine + L-glutamate = N-acetyl-L-glutamate + L-ornithine. The enzyme catalyses L-glutamate + acetyl-CoA = N-acetyl-L-glutamate + CoA + H(+). The protein operates within amino-acid biosynthesis; L-arginine biosynthesis; L-ornithine and N-acetyl-L-glutamate from L-glutamate and N(2)-acetyl-L-ornithine (cyclic): step 1/1. It participates in amino-acid biosynthesis; L-arginine biosynthesis; N(2)-acetyl-L-ornithine from L-glutamate: step 1/4. Its function is as follows. Catalyzes two activities which are involved in the cyclic version of arginine biosynthesis: the synthesis of N-acetylglutamate from glutamate and acetyl-CoA as the acetyl donor, and of ornithine by transacetylation between N(2)-acetylornithine and glutamate. This Synechococcus sp. (strain ATCC 27144 / PCC 6301 / SAUG 1402/1) (Anacystis nidulans) protein is Arginine biosynthesis bifunctional protein ArgJ.